Reading from the N-terminus, the 290-residue chain is 4-hydroxy-tetrahydrodipicolinate synthase (290 aa).

Thr-44 provides a ligand contact to pyruvate. The active-site Proton donor/acceptor is Tyr-132. Lys-160 (schiff-base intermediate with substrate) is an active-site residue. A pyruvate-binding site is contributed by Ile-202.

Belongs to the DapA family. As to quaternary structure, homotetramer; dimer of dimers.

It localises to the cytoplasm. The enzyme catalyses L-aspartate 4-semialdehyde + pyruvate = (2S,4S)-4-hydroxy-2,3,4,5-tetrahydrodipicolinate + H2O + H(+). Its pathway is amino-acid biosynthesis; L-lysine biosynthesis via DAP pathway; (S)-tetrahydrodipicolinate from L-aspartate: step 3/4. Functionally, catalyzes the condensation of (S)-aspartate-beta-semialdehyde [(S)-ASA] and pyruvate to 4-hydroxy-tetrahydrodipicolinate (HTPA). The chain is 4-hydroxy-tetrahydrodipicolinate synthase from Ruegeria pomeroyi (strain ATCC 700808 / DSM 15171 / DSS-3) (Silicibacter pomeroyi).